A 220-amino-acid polypeptide reads, in one-letter code: Chalcone--flavanone isomerase B (220 aa).

Substrate contacts are provided by T50, N115, and T192.

This sequence belongs to the chalcone isomerase family.

It carries out the reaction a chalcone = a flavanone.. It functions in the pathway secondary metabolite biosynthesis; flavonoid biosynthesis. Catalyzes the intramolecular cyclization of bicyclic chalcones into tricyclic (S)-flavanones. Responsible for the isomerization of 4,2',4',6'-tetrahydroxychalcone (also termed chalcone) into naringenin. The protein is Chalcone--flavanone isomerase B (CHI2) of Petunia hybrida (Petunia).